The primary structure comprises 65 residues: Large ribosomal subunit protein uL29 (65 aa).

This sequence belongs to the universal ribosomal protein uL29 family.

The protein is Large ribosomal subunit protein uL29 of Acidovorax ebreus (strain TPSY) (Diaphorobacter sp. (strain TPSY)).